A 1213-amino-acid chain; its full sequence is Formin (1213 aa).

Disordered regions lie at residues methionine 1 to aspartate 24, glutamine 66 to proline 111, valine 144 to cysteine 169, glycine 183 to glutamine 216, and aspartate 357 to asparagine 489. Basic and acidic residues-rich tracts occupy residues serine 187–leucine 210 and glutamate 431–proline 464. 2 coiled-coil regions span residues serine 428–arginine 450 and glutamate 503–serine 572. The segment at isoleucine 624 to arginine 774 is disordered. Residues valine 636–proline 647 show a composition bias toward polar residues. Pro residues-rich tracts occupy residues methionine 650–phenylalanine 672, leucine 680–threonine 689, and proline 718–proline 751. An FH1 domain is found at proline 652–proline 751. Residues phenylalanine 755–glycine 764 are compositionally biased toward polar residues. The FH2 domain occupies arginine 766–leucine 1182. The stretch at phenylalanine 1050 to threonine 1125 forms a coiled coil. The tract at residues isoleucine 1193–asparagine 1213 is disordered.

The protein belongs to the formin homology family. Cappuccino subfamily. In terms of tissue distribution, present in the adult brain, kidney, brain, heart and intestine and throughout the embryo.

The protein localises to the nucleus. Its function is as follows. Is important for morphogenesis of limb and kidney and may be involved in determining dorsoventral neural tube polarity and motor neuron induction. It may also have a function in differentiated cells or be involved in maintaining specific differentiated states. This Gallus gallus (Chicken) protein is Formin (LD).